Reading from the N-terminus, the 319-residue chain is ATP-dependent 6-phosphofructokinase (319 aa).

Residue glycine 11 coordinates ATP. Arginine 21–arginine 25 is a binding site for ADP. ATP-binding positions include arginine 72 to serine 73 and glycine 102 to serine 105. Residue aspartate 103 coordinates Mg(2+). Threonine 125–aspartate 127 contributes to the substrate binding site. Aspartate 127 functions as the Proton acceptor in the catalytic mechanism. An ADP-binding site is contributed by arginine 154. Substrate-binding positions include arginine 162 and methionine 169–arginine 171. ADP contacts are provided by residues glycine 185–glutamate 187, arginine 211, and lysine 213–histidine 215. Residues glutamate 222, arginine 243, and histidine 249–arginine 252 each bind substrate.

Belongs to the phosphofructokinase type A (PFKA) family. ATP-dependent PFK group I subfamily. Prokaryotic clade 'B1' sub-subfamily. In terms of assembly, homotetramer. The cofactor is Mg(2+).

It is found in the cytoplasm. It catalyses the reaction beta-D-fructose 6-phosphate + ATP = beta-D-fructose 1,6-bisphosphate + ADP + H(+). Its pathway is carbohydrate degradation; glycolysis; D-glyceraldehyde 3-phosphate and glycerone phosphate from D-glucose: step 3/4. Allosterically activated by ADP and other diphosphonucleosides, and allosterically inhibited by phosphoenolpyruvate. Catalyzes the phosphorylation of D-fructose 6-phosphate to fructose 1,6-bisphosphate by ATP, the first committing step of glycolysis. The sequence is that of ATP-dependent 6-phosphofructokinase from Natranaerobius thermophilus (strain ATCC BAA-1301 / DSM 18059 / JW/NM-WN-LF).